We begin with the raw amino-acid sequence, 307 residues long: D-alanine--D-alanine ligase (307 aa).

Residues 101–301 enclose the ATP-grasp domain; sequence KTVMRAAGVS…FGELVRWMVE (201 aa). 127–182 provides a ligand contact to ATP; it reads PLTPPYVVKPIAEGSSMGVIIVRDERSHPPQILASDEWVYGEEVLAETYVAGRELT. Residues Asp-251, Glu-268, and Asn-270 each coordinate Mg(2+).

This sequence belongs to the D-alanine--D-alanine ligase family. The cofactor is Mg(2+). Requires Mn(2+) as cofactor.

Its subcellular location is the cytoplasm. The catalysed reaction is 2 D-alanine + ATP = D-alanyl-D-alanine + ADP + phosphate + H(+). Its pathway is cell wall biogenesis; peptidoglycan biosynthesis. Functionally, cell wall formation. This is D-alanine--D-alanine ligase from Methylorubrum extorquens (strain PA1) (Methylobacterium extorquens).